The primary structure comprises 1350 residues: ABC-type transporter MDR1 (1350 aa).

Residues 1 to 11 show a composition bias toward basic and acidic residues; that stretch reads MDTVHEGHHGS. Positions 1–84 are disordered; it reads MDTVHEGHHG…DEGEDPFAHL (84 aa). The span at 22–33 shows a compositional bias: polar residues; the sequence is VEVTNYEKTQLG. Residues 52 to 63 are compositionally biased toward basic residues; that stretch reads KKHKSQKEKKHK. Positions 121–411 constitute an ABC transmembrane type-1 1 domain; sequence VLSALSSIIG…VAPNIQAFTT (291 aa). 6 helical membrane-spanning segments follow: residues 124-144, 170-190, 243-263, 271-291, 350-370, and 380-400; these read ALSSIIGGALLPLMTIVFGGL, LYFLYLAIGEFVFVYIATAGF, KVGLTLTALATFITAFVVSFI, ILMSTVFAIVFTMGGMSGFIV, GSMIGFLMCYVYLNYSLAFWM, and IEVGDVLTIILSIMIGAFALG. The region spanning 446–691 is the ABC transporter 1 domain; the sequence is IELRNIRHIY…QGAYYNLVEA (246 aa). 481-488 lines the ATP pocket; sequence GESGSGKS. The span at 712–731 shows a compositional bias: basic and acidic residues; that stretch reads KDQNLKHETTKGEQPEDGLK. Residues 712–734 form a disordered region; sequence KDQNLKHETTKGEQPEDGLKLAR. A run of 6 helical transmembrane segments spans residues 779 to 799, 830 to 850, 903 to 923, 929 to 949, 1014 to 1034, and 1044 to 1064; these read IGIICSVITGGGNPTQAVFFA, FMLALVQFSAFLIQGYVFAVC, LGTILSVIVTLVAAFSVSLAI, LVCISTVPILLACGFLRFWML, ASQSLIFCCTALGFWYGGTLI, and FFLCFSAVIFGAQSAGTIFSF. The region spanning 779–1070 is the ABC transmembrane type-1 2 domain; the sequence is IGIICSVITG…IFSFAPDMGK (292 aa). The region spanning 1105–1343 is the ABC transporter 2 domain; sequence IEFRDVHFRY…RGRYWELVNL (239 aa). Residue N1127 is glycosylated (N-linked (GlcNAc...) asparagine). Residue 1140–1147 coordinates ATP; sequence GASGCGKS.

The protein belongs to the ABC transporter superfamily. ABCB family. Multidrug resistance exporter (TC 3.A.1.201) subfamily.

It is found in the cell membrane. ABC-type transporter that is involved in the secretion of liamocins, glycolipids (also called heavy oils) composed of a single mannitol or arabitol headgroup linked to either three, four or even six 3,5-dihydroxydecanoic ester tail-groups. This is ABC-type transporter MDR1 from Aureobasidium melanogenum (Aureobasidium pullulans var. melanogenum).